Here is a 368-residue protein sequence, read N- to C-terminus: MNNKIALYCRSGFEKECAAEITEKAAQLEIFGFARVKENSGYVLFECYQLEDADRLIREIPFREFIFARQMMVVGELLKDLPPEDRVSPIVGMLVGVIEKAGELRVEVADTNESKELLKFCRKLTVPLRSALREQKILSARENAHRPVVHVFFIAPGCCYVGYSYSNNNSPFYMGIPRLKFPSDAPSRSTLKLEEAFHVFIPADEWEERLASGMHAVDLGACPGGWTYQLVQRSMMIQAVDNGLMAQSLMDTGQVTHNRADGFKYEPTRSNIYWLVCDMVEKPTKVTQLITKWLVNGWCREAIFNLKLPMKKRYEEVVQNLAMMDEQLKENGINADIHAKQLYHDREEVTVHVRRIWSGAPGRRDERY.

S-adenosyl-L-methionine is bound by residues Ser189, 222 to 225, Asp241, Asp261, and Asp278; that span reads CPGG. The active-site Proton acceptor is the Lys307.

The protein belongs to the class I-like SAM-binding methyltransferase superfamily. RNA methyltransferase RlmE family. RlmM subfamily. In terms of assembly, monomer.

The protein localises to the cytoplasm. The enzyme catalyses cytidine(2498) in 23S rRNA + S-adenosyl-L-methionine = 2'-O-methylcytidine(2498) in 23S rRNA + S-adenosyl-L-homocysteine + H(+). In terms of biological role, catalyzes the 2'-O-methylation at nucleotide C2498 in 23S rRNA. This Yersinia pestis bv. Antiqua (strain Angola) protein is Ribosomal RNA large subunit methyltransferase M.